Here is a 341-residue protein sequence, read N- to C-terminus: Myb-related transcription factor, partner of profilin (341 aa).

The region spanning Val-8–Lys-80 is the Myb-like domain. Disordered regions lie at residues Lys-84–Met-103, Leu-180–Val-210, and Ala-309–Leu-341. Residues Thr-184–Ser-200 are compositionally biased toward pro residues. Basic residues predominate over residues Asn-321–Leu-341.

It is found in the nucleus. Its function is as follows. Transcriptional repressor; DNA-binding protein that specifically recognizes the core sequence 5'-YAAC[GT]G-3'. In Xenopus laevis (African clawed frog), this protein is Myb-related transcription factor, partner of profilin (mypop).